The primary structure comprises 94 residues: Evasin P1086 (94 aa).

The signal sequence occupies residues 1–28 (MAFNVITFLQLAVFVVILFNINLHSASA). Disulfide bonds link Cys-48–Cys-67, Cys-52–Cys-69, and Cys-63–Cys-80. Asn-74 is a glycosylation site (N-linked (GlcNAc...) asparagine).

It is found in the secreted. Its function is as follows. Salivary chemokine-binding protein which binds to host chemokines CXCL1, CXCL2, CXCL3, CXCL5, CXCL6, CXCL10, CXCL12 and CXCL13. The sequence is that of Evasin P1086 from Ixodes ricinus (Common tick).